The primary structure comprises 350 residues: tRNA uridine(34) hydroxylase (350 aa).

A Rhodanese domain is found at 146-240 (DDPDAVFIDM…YARRARAQGL (95 aa)). Cysteine 200 serves as the catalytic Cysteine persulfide intermediate. Over residues 319 to 328 (RRRRAGRENG) the composition is skewed to basic and acidic residues. The disordered stretch occupies residues 319 to 350 (RRRRAGRENGNKIFNKSRGRLNSKLSIPDPAE).

Belongs to the TrhO family.

It carries out the reaction uridine(34) in tRNA + AH2 + O2 = 5-hydroxyuridine(34) in tRNA + A + H2O. Catalyzes oxygen-dependent 5-hydroxyuridine (ho5U) modification at position 34 in tRNAs. This Salmonella paratyphi B (strain ATCC BAA-1250 / SPB7) protein is tRNA uridine(34) hydroxylase.